The chain runs to 82 residues: uncharacterized protein (82 aa).

2 helical membrane passes run 22 to 39 and 46 to 65; these read WASDVVIQFITIVVMFIA and LKMGGIIFVCCIGSAVTWVI.

The protein resides in the cell membrane. This is an uncharacterized protein from Bacillus subtilis (strain 168).